We begin with the raw amino-acid sequence, 100 residues long: Carboxysome shell vertex protein CcmL (100 aa).

One can recognise a BMV domain in the interval 1-83 (MQLAKVLGTV…LDAMVVGIID (83 aa)).

It belongs to the CcmL/EutN family. CcmL subfamily. Homopentamer. Interacts with full-length CcmM.

Its subcellular location is the carboxysome. Probably forms vertices in the carboxysome, a polyhedral inclusion where RuBisCO (ribulose bisphosphate carboxylase, rbcL-rbcS) is sequestered. Has been modeled to induce curvature upon insertion into an otherwise flat hexagonal molecular layer of CcmK subunits. This is Carboxysome shell vertex protein CcmL from Synechocystis sp. (strain ATCC 27184 / PCC 6803 / Kazusa).